We begin with the raw amino-acid sequence, 209 residues long: Molybdenum cofactor guanylyltransferase (209 aa).

GTP-binding positions include 14-16 (LAG), Lys-31, and Asp-104. Asp-104 serves as a coordination point for Mg(2+).

This sequence belongs to the MobA family. In terms of assembly, monomer. The cofactor is Mg(2+).

It localises to the cytoplasm. The enzyme catalyses Mo-molybdopterin + GTP + H(+) = Mo-molybdopterin guanine dinucleotide + diphosphate. Functionally, transfers a GMP moiety from GTP to Mo-molybdopterin (Mo-MPT) cofactor (Moco or molybdenum cofactor) to form Mo-molybdopterin guanine dinucleotide (Mo-MGD) cofactor. In Helicobacter pylori (strain J99 / ATCC 700824) (Campylobacter pylori J99), this protein is Molybdenum cofactor guanylyltransferase.